The primary structure comprises 160 residues: Transcription elongation factor GreA (160 aa).

It belongs to the GreA/GreB family.

In terms of biological role, necessary for efficient RNA polymerase transcription elongation past template-encoded arresting sites. The arresting sites in DNA have the property of trapping a certain fraction of elongating RNA polymerases that pass through, resulting in locked ternary complexes. Cleavage of the nascent transcript by cleavage factors such as GreA or GreB allows the resumption of elongation from the new 3'terminus. GreA releases sequences of 2 to 3 nucleotides. This Leuconostoc citreum (strain KM20) protein is Transcription elongation factor GreA.